Here is a 1086-residue protein sequence, read N- to C-terminus: MEDLQTRIAALSPKQRALFESRLRAAAAPGPDPAIPRRPDDDGPVPLSFAQHRLWFLDQLEPGRPVYNVSASLRIGRPVTTEAVRDALGALTRRHEVLRTVFPADGGEPRQHIADSLTPPLTETDLRALPDSARAAAALRLCAEDKQRPFDLSSGPLLRCLLLRLRDDDALLFLTFHHTVFDGWSIGLLRRDLTALLHAAETGTDAGLPPLPIQYADFADWQRRMLDEKRLGELLGYWRERIRGAPPVIDLPFDRPRPAVATTEGARRRFALPAELTTALRDLAARSGATPFMTMLTVFAALLHRWSGERDMVIGTPVANRARPELDDLIGFFANTLAMRVRIEPGMSFGDLLAQVRQTVVEALARQDLPFERLVDEARTERTLTHNPLFQVAFVMEDGRDASELDTLLPERARDTHTPDSAKFDLTLVLTDRESTYTGYFEYNTALFEPVTIDRLGERLALLARSVAADPGWELAALPVLTRDEIRHLKEVNAPVADDPRHHRTLHGVLEDSARRHPDHTAVEAPDRQLTYRELDEAANRLAHHLLALGVRPEQPVGVALDGTADAIVATFAVLKAGAVLLPLDPEYPAERLEHILRRSGATLLLTQRSLAGRFAGNDVTTVLLDDDATRAALADGPADRPGLPIAPDRLAYVIFTSGSTGVPKGVMVPHRGIGSLTRSAEQFAQTPDSRVLRFASPSFDVSLLELLMTFDAGATLVLEPRALLVPGEDLARLIRERRVSTVLLSPSALSTLTAGELPGLRTVVMAGEAATLELAQQWCDGRDVFNGYGPTEATVLATIARCAPDRVPPLGRPVAGYTVHVLDDTLRPVPFGRQGELFLGGVGLARGYLDQPDVTADRFLPDPSGTEPGARLYRTGDVVRWGADGELEFLGRTDHQVKLRGFRIELGEIETRLEDHPGVRTAVVLVRGEGSDRRLAGYAVRAPGEERPTAAGLRQWLRDRLPGYMVPELFLVLDALPTSPNGKLDREALPDPLAQSGDTAGNRPPLLDPVEERISGIWQEVLGIAPPGSADNFFEVGGNSLSATRIIARVNQAFGVRLPVRSLFVEPTLSGLARSVSAERAEELP.

The disordered stretch occupies residues 22–43 (RLRAAAAPGPDPAIPRRPDDDG). The condensation stretch occupies residues 45 to 484 (VPLSFAQHRL…LAALPVLTRD (440 aa)). The tract at residues 510–901 (LEDSARRHPD…GRTDHQVKLR (392 aa)) is adenylation. The disordered stretch occupies residues 983–1007 (GKLDREALPDPLAQSGDTAGNRPPL). The Carrier domain occupies 1006–1081 (PLLDPVEERI…GLARSVSAER (76 aa)). The residue at position 1041 (serine 1041) is an O-(pantetheine 4'-phosphoryl)serine.

Belongs to the NRP synthetase family. Requires pantetheine 4'-phosphate as cofactor.

The catalysed reaction is holo-[peptidyl-carrier protein] + L-alanine + ATP = L-alanyl-[peptidyl-carrier protein] + AMP + diphosphate. It functions in the pathway secondary metabolite biosynthesis; bialaphos biosynthesis. Involved in the biosynthesis of phosphinothricin tripeptide (PTT), also known as bialaphos (BA), a natural-product antibiotic and potent herbicide. Adenylates L-alanine and loads it onto a peptidyl carrier domain via a thioester linkage to the phosphopanthetheine moiety. Shows weaker activity with aminobutyric acid and L-serine. In Streptomyces viridochromogenes (strain DSM 40736 / JCM 4977 / BCRC 1201 / Tue 494), this protein is Phosphinothricin tripeptide synthetase PhsC.